We begin with the raw amino-acid sequence, 339 residues long: Transcription factor IIIA (339 aa).

C2H2-type zinc fingers lie at residues 12–36 (FICS…LCKH), 42–66 (FPCT…VLSH), 72–97 (CKCE…KRAH), 104–128 (YVCY…QYIH), 134–158 (FKCS…EKTH), 161–187 (YPCR…AELH), 190–212 (VTCS…KKIH), 219–244 (YRCP…LTFH), and 250–274 (FVCE…FNTH). A disordered region spans residues 271 to 339 (FNTHDPEKKK…LPVLENLTLK (69 aa)). The span at 299 to 309 (KPKKSKKKKKP) shows a compositional bias: basic residues. A compositionally biased stretch (polar residues) spans 311-323 (QTPAMESQEQQPD).

It localises to the nucleus. Its function is as follows. Involved in ribosomal large subunit biogenesis. Interacts with the internal control region (ICR) of approximately 50 bases within the 5S RNA genes, is required for correct transcription of these genes by RNA polymerase III. Also binds the transcribed 5S RNA's. In Anaxyrus americanus (American toad), this protein is Transcription factor IIIA (gtf3a).